Reading from the N-terminus, the 508-residue chain is Pentatricopeptide repeat-containing protein At3g04130, mitochondrial (508 aa).

The transit peptide at 1–74 directs the protein to the mitochondrion; the sequence is MSWLIQNRIG…DSEDDVFKRL (74 aa). 10 PPR repeats span residues 120-150, 154-188, 189-219, 223-257, 258-292, 293-327, 328-363, 364-398, 400-434, and 436-470; these read SSDA…MRGD, TLNT…GLEK, NTES…LKSH, NAHT…GFRP, CVIS…GSPP, NSIT…GCKP, DSLF…GVSI, NTST…NLCN, DVHT…HHLS, and DEST…DITP.

The protein belongs to the PPR family. P subfamily.

The protein localises to the mitochondrion. The sequence is that of Pentatricopeptide repeat-containing protein At3g04130, mitochondrial from Arabidopsis thaliana (Mouse-ear cress).